A 342-amino-acid chain; its full sequence is Glucokinase (342 aa).

Position 18–23 (18–23) interacts with ATP; that stretch reads GDIGGT.

The protein belongs to the bacterial glucokinase family.

The protein localises to the cytoplasm. The catalysed reaction is D-glucose + ATP = D-glucose 6-phosphate + ADP + H(+). In Chelativorans sp. (strain BNC1), this protein is Glucokinase.